The sequence spans 154 residues: MAYAVVRVRGSVGVRGDIADTMKMLRLHRVNHCVVIPENDHYTGMIKKVKDYVTYGEIDKETLVSLILKRGRLAGNKRLSEELLKELVELPVDALAEKVLAGEIKLKDTPIKPVFRLHPPRRGYDRGGIKKGFSIGGALGYRAGKINDLLNKMM.

This sequence belongs to the universal ribosomal protein uL30 family. Part of the 50S ribosomal subunit.

The polypeptide is Large ribosomal subunit protein uL30 (Methanococcus vannielii).